The chain runs to 149 residues: Transcriptional repressor NrdR (149 aa).

A zinc finger lies at 3-34; sequence CPFCTAVDTKVIDSRLVGDGSQVRRRRQCLVC. The ATP-cone domain occupies 49–139; the sequence is PRVVKSDEIR…VYRSFEDVRD (91 aa).

Belongs to the NrdR family. The cofactor is Zn(2+).

Negatively regulates transcription of bacterial ribonucleotide reductase nrd genes and operons by binding to NrdR-boxes. The chain is Transcriptional repressor NrdR from Proteus mirabilis (strain HI4320).